The following is a 136-amino-acid chain: Histone H3.2 (136 aa).

The segment at 1-43 (MARTKQTARKSTGGKAPRKQLATKAARKSAPATGGVKKPHRFR) is disordered. N6-methylated lysine is present on lysine 5. Lysine 10 is subject to N6-acetyllysine; alternate. Position 10 is an N6-methylated lysine; alternate (lysine 10). Serine 11 carries the post-translational modification Phosphoserine. Threonine 12 carries the phosphothreonine modification. N6-acetyllysine is present on lysine 15. An N6-acetyllysine; alternate mark is found at lysine 19 and lysine 24. N6-methylated lysine; alternate occurs at positions 19 and 24. Lysine 28 carries the N6-methylated lysine modification. Position 29 is a phosphoserine (serine 29). Lysine 37 is subject to N6-methylated lysine.

The protein belongs to the histone H3 family. The nucleosome is a histone octamer containing two molecules each of H2A, H2B, H3 and H4 assembled in one H3-H4 heterotetramer and two H2A-H2B heterodimers. The octamer wraps approximately 147 bp of DNA. In terms of processing, acetylation is generally linked to gene activation. Can be acetylated to form H3K9ac, H3K14ac, H3K18ac and H3K23ac. H3K9ac could compete with H3K9me and prevent gene silencing. H3K9ac is restricted to euchromatin. Post-translationally, methylated to form mainly H3K4me, H3K9me, H3K18me, H3K23me, H3K27me and H3K36me. H3K4me1/2/3, H3K9me3, H3K27me3 and H3K36me1/2/3 are typical marks for euchromatin, whereas heterochromatic chromocenters are enriched in H3K9me1/2 and H3K27me1/2. H2BK143ub1 is probably prerequisite for H3K4me. Can be phosphorylated to form H3S10ph, H3T11ph and H3S28ph.

Its subcellular location is the nucleus. It is found in the chromosome. Functionally, core component of nucleosome. Nucleosomes wrap and compact DNA into chromatin, limiting DNA accessibility to the cellular machineries which require DNA as a template. Histones thereby play a central role in transcription regulation, DNA repair, DNA replication and chromosomal stability. DNA accessibility is regulated via a complex set of post-translational modifications of histones, also called histone code, and nucleosome remodeling. The sequence is that of Histone H3.2 from Encephalartos altensteinii (Altenstein's bread tree).